The primary structure comprises 339 residues: Neutrophil cytosol factor 4 (339 aa).

A PX domain is found at 19–140 (DVAVSANIAD…IFFYQSAYDA (122 aa)). A 1,2-diacyl-sn-glycero-3-phospho-(1D-myo-inositol-3-phosphate) contacts are provided by residues 58 to 60 (RYR) and 92 to 94 (KVY). Thr-154 is modified (phosphothreonine). Residues 170 to 229 (MEAPRAEALFDFTGNSKLELSFKAGDVIFLLSKINKDWLEGTSQGATGIFPGSFVKILKD) enclose the SH3 domain. The region spanning 237-329 (TNWLRCYFYE…FPWKLHVTQK (93 aa)) is the PB1 domain. Ser-315 is modified (phosphoserine).

Component of the phagocyte NADPH oxidase complex composed of an obligatory core heterodimer formed by the membrane proteins CYBA and CYBB and the cytosolic regulatory subunits NCF1/p47-phox, NCF2/p67-phox, NCF4/p40-phox and the small GTPase RAC1 or RAC2. Part of a cytosolic complex composed at least by NCF1, NCF2 and NCF4. Interacts with NCF2. Interacts with NCF1. The NCF2-NCF4 complex interacts with GBP7 (via GB1/RHD3-type G domain).

It is found in the cytoplasm. The protein resides in the cytosol. It localises to the endosome membrane. Its subcellular location is the membrane. Its function is as follows. Subunit of the phagocyte NADPH oxidase complex that mediates the transfer of electrons from cytosolic NADPH to O2 to produce the superoxide anion (O2(-)). In the activated complex, electrons are first transferred from NADPH to flavin adenine dinucleotide (FAD) and subsequently transferred via two heme molecules to molecular oxygen, producing superoxide through an outer-sphere reaction. Activation of the NADPH oxidase complex is initiated by the assembly of cytosolic subunits of the NADPH oxidase complex with the core NADPH oxidase complex to form a complex at the plasma membrane or phagosomal membrane. This activation process is initiated by phosphorylation dependent binding of the cytosolic NCF1/p47-phox subunit to the C-terminus of CYBA/p22-phox. This chain is Neutrophil cytosol factor 4, found in Mus musculus (Mouse).